Reading from the N-terminus, the 379-residue chain is Carbamoyl phosphate synthase small chain (379 aa).

The CPSase stretch occupies residues 1–189 (MSKSALLVLE…GLPEAKADSE (189 aa)). Residues S47, G241, and G243 each coordinate L-glutamine. The region spanning 193–379 (HVVAYDFGAK…FIELIKQFRA (187 aa)) is the Glutamine amidotransferase type-1 domain. Catalysis depends on C269, which acts as the Nucleophile. L-glutamine contacts are provided by L270, Q273, N311, G313, and F314. Active-site residues include H353 and E355.

It belongs to the CarA family. In terms of assembly, composed of two chains; the small (or glutamine) chain promotes the hydrolysis of glutamine to ammonia, which is used by the large (or ammonia) chain to synthesize carbamoyl phosphate. Tetramer of heterodimers (alpha,beta)4.

The catalysed reaction is hydrogencarbonate + L-glutamine + 2 ATP + H2O = carbamoyl phosphate + L-glutamate + 2 ADP + phosphate + 2 H(+). The enzyme catalyses L-glutamine + H2O = L-glutamate + NH4(+). It participates in amino-acid biosynthesis; L-arginine biosynthesis; carbamoyl phosphate from bicarbonate: step 1/1. Its pathway is pyrimidine metabolism; UMP biosynthesis via de novo pathway; (S)-dihydroorotate from bicarbonate: step 1/3. Its function is as follows. Small subunit of the glutamine-dependent carbamoyl phosphate synthetase (CPSase). CPSase catalyzes the formation of carbamoyl phosphate from the ammonia moiety of glutamine, carbonate, and phosphate donated by ATP, constituting the first step of 2 biosynthetic pathways, one leading to arginine and/or urea and the other to pyrimidine nucleotides. The small subunit (glutamine amidotransferase) binds and cleaves glutamine to supply the large subunit with the substrate ammonia. This chain is Carbamoyl phosphate synthase small chain, found in Vibrio cholerae serotype O1 (strain ATCC 39315 / El Tor Inaba N16961).